We begin with the raw amino-acid sequence, 736 residues long: MARDPRFDILFTPLKLGSKTIRNRFYQVPHCNGAGTNSPGMNMAHRGIKAEGGWGAVNTEQCSIHPECDDTLRITARIWDQGDMRNLRAMVDHVHSHGSLAGCELFYGGPHAPAIESRTISRGPSQYNSEFATVPGCPGFTYNHEADIDELERLQQQYVDAALRARDTGFDLVNVYGAHAYGPMQWLNPYYNRRTDKYGGSFDNRARFWIETLEKIRRAVNDDVALVTRCATDTLYGTKGVELTEDGLRFIELASPYLDLWDVNIGDIAEWGEDAGPSRFYPIAHENDWIRHIKQATNKPVVGVGRYYDPEKMLQVIKAGIIDIIGAARPSIADPWLPRKIDEGRVDDIRTCIGCNVCISRWEMGGVPFICTQNATAGEEYRRGWHPEKFEPKKSDHDVLIVGAGPAGSECARVLMERGYTVHLVDTREKTGGYVNDVATLPGLGEWSFHRDYRQTQLEKLLKKNPECQIALKQKPMTADDILQYGASRVVIATGAKWSTTGVNHRTHEPIPGADASLPHVLTPEQVYEGKKAVGKRVMIINYDAYYTAPSLAEKFARAGHDVTVATVCGLGAYMEYTLEGANMQRLIHELGIKVLGETGCSRVEQGRVELFNIWGEGYKRSYKGAGQLPRNENTSHEWHECDTVILVTSRRSEDTLYRELKARKGEWEANGITNVFVIGDAESPRIIADATFDGHRLAREIEDADPQHQKPYKREQRAWGTAYNPDENPDLVWRV.

Position 31 is an S-6-FMN cysteine (Cys-31). 176-179 (YGAH) serves as a coordination point for substrate. The Proton donor role is filled by Tyr-181. FMN contacts are provided by Arg-229 and Arg-329. 4 residues coordinate [4Fe-4S] cluster: Cys-352, Cys-355, Cys-358, and Cys-371. An ADP-binding site is contributed by 398-427 (DVLIVGAGPAGSECARVLMERGYTVHLVDT).

This sequence in the N-terminal section; belongs to the NADH:flavin oxidoreductase/NADH oxidase family. The cofactor is FMN. [4Fe-4S] cluster is required as a cofactor.

The catalysed reaction is dimethylamine + oxidized [electron-transfer flavoprotein] + H2O + H(+) = methylamine + reduced [electron-transfer flavoprotein] + formaldehyde. The chain is Dimethylamine dehydrogenase (dmd) from Hyphomicrobium sp. (strain x).